Reading from the N-terminus, the 269-residue chain is uncharacterized protein (269 aa).

A run of 8 helical transmembrane segments spans residues 9 to 29 (YIIGLVLALGVSFATLLAHLF), 50 to 70 (FMLGGYLLVEYLSFLLMIVPL), 82 to 102 (FSIIHTSIWYNVFVVFTVWAF), 107 to 127 (LYWTAFFSLCLFSSSFTMYGQ), 147 to 167 (LVFGKSLWFVVYAFSAALHCT), 173 to 193 (VFSNVFIWFFAAMYLVPILGF), 200 to 220 (LVSAYLFLSIGIGQMFIHLFA), and 224 to 244 (IFAFIIAGLMTLFAALLFLLP).

The protein localises to the membrane. This is an uncharacterized protein from Schizosaccharomyces pombe (strain 972 / ATCC 24843) (Fission yeast).